We begin with the raw amino-acid sequence, 592 residues long: Glutamine-rich protein 2 (592 aa).

Residues Gln488–His592 are disordered. The segment covering Leu544 to Leu567 has biased composition (polar residues).

In terms of assembly, interacts with AKAP3, ODF2 and TSSK4. Interacts with AKAP4. As to expression, expressed in testis. Not detected in heart, brain, kidney, stomach, ovary, liver, lung and uterus.

Its subcellular location is the nucleus membrane. It is found in the nucleus. It localises to the cytoplasm. The protein localises to the cell projection. The protein resides in the cilium. Its subcellular location is the flagellum. In terms of biological role, has an essential role in the formation of sperm flagella and flagellar structure maintainance. It acts as a suppressor of ubiquitination and degradation of proteins involved in flagellar development and motility. This Mus musculus (Mouse) protein is Glutamine-rich protein 2.